Consider the following 291-residue polypeptide: Protein/nucleic acid deglycase HchA (291 aa).

Over residues 1–18 (MSNERDTSRTPTPDHAEH) the composition is skewed to basic and acidic residues. The segment at 1–20 (MSNERDTSRTPTPDHAEHNA) is disordered. The active-site Nucleophile is the Cys188.

It belongs to the peptidase C56 family. HchA subfamily.

It is found in the cytoplasm. The catalysed reaction is N(omega)-(1-hydroxy-2-oxopropyl)-L-arginyl-[protein] + H2O = lactate + L-arginyl-[protein] + H(+). It catalyses the reaction N(6)-(1-hydroxy-2-oxopropyl)-L-lysyl-[protein] + H2O = lactate + L-lysyl-[protein] + H(+). It carries out the reaction S-(1-hydroxy-2-oxopropyl)-L-cysteinyl-[protein] + H2O = lactate + L-cysteinyl-[protein] + H(+). The enzyme catalyses N(omega)-(1-hydroxy-2-oxoethyl)-L-arginyl-[protein] + H2O = L-arginyl-[protein] + glycolate + H(+). The catalysed reaction is N(6)-(1-hydroxy-2-oxoethyl)-L-lysyl-[protein] + H2O = glycolate + L-lysyl-[protein] + H(+). It catalyses the reaction S-(1-hydroxy-2-oxoethyl)-L-cysteinyl-[protein] + H2O = glycolate + L-cysteinyl-[protein] + H(+). It carries out the reaction N(2)-(1-hydroxy-2-oxopropyl)-dGTP + H2O = lactate + dGTP + H(+). The enzyme catalyses N(2)-(1-hydroxy-2-oxopropyl)-GTP + H2O = lactate + GTP + H(+). The catalysed reaction is N(2)-(1-hydroxy-2-oxopropyl)-GDP + H2O = lactate + GDP + H(+). It catalyses the reaction N(2)-(1-hydroxy-2-oxopropyl)-GMP + H2O = lactate + GMP + H(+). It carries out the reaction N(2)-(1-hydroxy-2-oxoethyl)-dGTP + H2O = dGTP + glycolate + H(+). The enzyme catalyses N(2)-(1-hydroxy-2-oxoethyl)-GTP + H2O = glycolate + GTP + H(+). The catalysed reaction is N(2)-(1-hydroxy-2-oxoethyl)-GDP + H2O = glycolate + GDP + H(+). It catalyses the reaction N(2)-(1-hydroxy-2-oxoethyl)-GMP + H2O = glycolate + GMP + H(+). It carries out the reaction an N(2)-(1-hydroxy-2-oxopropyl)-guanosine in RNA + H2O = a guanosine in RNA + lactate + H(+). The enzyme catalyses an N(2)-(1-hydroxy-2-oxopropyl)-2'-deoxyguanosine in DNA + H2O = a 2'-deoxyguanosine in DNA + lactate + H(+). The catalysed reaction is an N(2)-(1-hydroxy-2-oxoethyl)-guanosine in RNA + H2O = a guanosine in RNA + glycolate + H(+). It catalyses the reaction an N(2)-(1-hydroxy-2-oxoethyl)-2'-deoxyguanosine in DNA + H2O = a 2'-deoxyguanosine in DNA + glycolate + H(+). Functionally, protein and nucleotide deglycase that catalyzes the deglycation of the Maillard adducts formed between amino groups of proteins or nucleotides and reactive carbonyl groups of glyoxals. Thus, functions as a protein deglycase that repairs methylglyoxal- and glyoxal-glycated proteins, and releases repaired proteins and lactate or glycolate, respectively. Deglycates cysteine, arginine and lysine residues in proteins, and thus reactivates these proteins by reversing glycation by glyoxals. Acts on early glycation intermediates (hemithioacetals and aminocarbinols), preventing the formation of Schiff bases and advanced glycation endproducts (AGE). Also functions as a nucleotide deglycase able to repair glycated guanine in the free nucleotide pool (GTP, GDP, GMP, dGTP) and in DNA and RNA. Is thus involved in a major nucleotide repair system named guanine glycation repair (GG repair), dedicated to reversing methylglyoxal and glyoxal damage via nucleotide sanitization and direct nucleic acid repair. Plays an important role in protecting cells from carbonyl stress. The protein is Protein/nucleic acid deglycase HchA of Pseudomonas aeruginosa (strain LESB58).